The sequence spans 309 residues: Serine/threonine-protein phosphatase 2A catalytic subunit alpha isoform (309 aa).

4 residues coordinate Mn(2+): Asp-57, His-59, Asp-85, and Asn-117. Residues Asp-57, His-59, and Asp-85 each contribute to the Zn(2+) site. Fe(3+) contacts are provided by Asp-85 and Asn-117. His-118 functions as the Proton donor in the catalytic mechanism. The Mn(2+) site is built by His-167 and His-241. The Fe(3+) site is built by His-167 and His-241. At Tyr-307 the chain carries Phosphotyrosine. Position 309 is a leucine methyl ester (Leu-309).

This sequence belongs to the PPP phosphatase family. PP-1 subfamily. PP2A consists of a common heterodimeric core enzyme, composed of PPP2CA, a 36 kDa catalytic subunit (subunit C), and PPP2R1A, a 65 kDa constant regulatory subunit (PR65 or subunit A), that associates with a variety of regulatory subunits. Proteins that associate with the core dimer include three families of regulatory subunits B (the R2/B/PR55/B55, R3/B''/PR72/PR130/PR59 and R5/B'/B56 families), the 48 kDa variable regulatory subunit, viral proteins, and cell signaling molecules. May indirectly interact with SGOL1, most probably through regulatory B56 subunits. Phosphatase component of the Integrator-PP2A (INTAC) complex, composed of the Integrator core complex and protein phosphatase 2A subunits PPP2CA and PPP2R1A. It depends on Mn(2+) as a cofactor. The cofactor is Fe(3+). Zn(2+) serves as cofactor. Reversibly methyl esterified on Leu-309 by leucine carboxyl methyltransferase 1 (LCMT1) and protein phosphatase methylesterase 1 (PPME1). Carboxyl methylation influences the affinity of the catalytic subunit for the different regulatory subunits, thereby modulating the PP2A holoenzyme's substrate specificity, enzyme activity and cellular localization. In terms of processing, phosphorylation of either threonine (by autophosphorylation-activated protein kinase) or tyrosine results in inactivation of the phosphatase. Auto-dephosphorylation has been suggested as a mechanism for reactivation.

It is found in the cytoplasm. It localises to the nucleus. The protein localises to the chromosome. The protein resides in the centromere. Its subcellular location is the cytoskeleton. It is found in the spindle pole. It carries out the reaction O-phospho-L-seryl-[protein] + H2O = L-seryl-[protein] + phosphate. The catalysed reaction is O-phospho-L-threonyl-[protein] + H2O = L-threonyl-[protein] + phosphate. Its activity is regulated as follows. Inhibited by the interaction between PPP2R2A and ARPP19; this inhibition is enhanced when ARPP19 is phosphorylated. Inhibited by the interaction between PPP2R2A and PABIR1/FAM122A. In terms of biological role, PP2A is the major phosphatase for microtubule-associated proteins (MAPs). PP2A can modulate the activity of phosphorylase B kinase casein kinase 2, mitogen-stimulated S6 kinase, and MAP-2 kinase. Key mediator of a quality checkpoint during transcription elongation as part of the Integrator-PP2A (INTAC) complex. The INTAC complex drives premature transcription termination of transcripts that are unfavorably configured for transcriptional elongation: within the INTAC complex, PPP2CA catalyzes dephosphorylation of the C-terminal domain (CTD) of Pol II subunit POLR2A/RPB1 and SUPT5H/SPT5, thereby preventing transcriptional elongation. The protein is Serine/threonine-protein phosphatase 2A catalytic subunit alpha isoform (PPP2CA) of Gallus gallus (Chicken).